The following is a 447-amino-acid chain: uncharacterized protein (447 aa).

2 helical membrane-spanning segments follow: residues 380–400 (VLEI…LLLT) and 412–432 (ILGF…GVYV).

It is found in the cell membrane. This is an uncharacterized protein from Methanocaldococcus jannaschii (strain ATCC 43067 / DSM 2661 / JAL-1 / JCM 10045 / NBRC 100440) (Methanococcus jannaschii).